The primary structure comprises 317 residues: MPVQGSQRRLLGSLNSTPTATPHLGLAANQTGARCLEVSIPDGLFLSLGLVSLVENVLVVTAIAKNRNLHSPMYCFICCLALSDLLVSGSNMLETAVILLLEAGALAARAAVVQQLDNVIDVITCSSMLASLCFLGAIAVDRYISIFYALRYHSIVTLPRARRAVAAIWVASVLFSMLFIAYYDHAAVLLCLVVFFLAMLVLMAVLYIHMLARARQHAQGIARLHKRQCPAHQGFGLKGAATLTILLGIFFLCWGPFFLHLTLIVLCPQHPTCSCIFKNFNLFLALIICNAIIDPLIYAFRSQELRRTLKEVLLCSW.

The Extracellular segment spans residues 1–37; it reads MPVQGSQRRLLGSLNSTPTATPHLGLAANQTGARCLE. N29 carries N-linked (GlcNAc...) asparagine glycosylation. A helical membrane pass occupies residues 38-63; the sequence is VSIPDGLFLSLGLVSLVENVLVVTAI. Over 64 to 72 the chain is Cytoplasmic; that stretch reads AKNRNLHSP. A helical transmembrane segment spans residues 73 to 93; it reads MYCFICCLALSDLLVSGSNML. Topologically, residues 94-118 are extracellular; it reads ETAVILLLEAGALAARAAVVQQLDN. Residues 119 to 140 traverse the membrane as a helical segment; the sequence is VIDVITCSSMLASLCFLGAIAV. Over 141 to 163 the chain is Cytoplasmic; the sequence is DRYISIFYALRYHSIVTLPRARR. Residues 164 to 183 traverse the membrane as a helical segment; the sequence is AVAAIWVASVLFSMLFIAYY. At 184 to 191 the chain is on the extracellular side; it reads DHAAVLLC. Residues 192 to 211 form a helical membrane-spanning segment; that stretch reads LVVFFLAMLVLMAVLYIHML. Residues 212–240 lie on the Cytoplasmic side of the membrane; it reads ARARQHAQGIARLHKRQCPAHQGFGLKGA. The helical transmembrane segment at 241–266 threads the bilayer; it reads ATLTILLGIFFLCWGPFFLHLTLIVL. Residues 267–279 lie on the Extracellular side of the membrane; that stretch reads CPQHPTCSCIFKN. Residues 280-300 form a helical membrane-spanning segment; it reads FNLFLALIICNAIIDPLIYAF. The Cytoplasmic portion of the chain corresponds to 301-317; the sequence is RSQELRRTLKEVLLCSW. Residue C315 is the site of S-palmitoyl cysteine attachment.

It belongs to the G-protein coupled receptor 1 family. As to quaternary structure, interacts with MGRN1, but does not undergo MGRN1-mediated ubiquitination; this interaction competes with GNAS-binding and thus inhibits agonist-induced cAMP production. Interacts with OPN3; the interaction results in a decrease in MC1R-mediated cAMP signaling and ultimately a decrease in melanin production in melanocytes.

Its subcellular location is the cell membrane. In terms of biological role, receptor for MSH (alpha, beta and gamma) and ACTH. The activity of this receptor is mediated by G proteins which activate adenylate cyclase. Mediates melanogenesis, the production of eumelanin (black/brown) and phaeomelanin (red/yellow), via regulation of cAMP signaling in melanocytes. The chain is Melanocyte-stimulating hormone receptor (MC1R) from Cercopithecus mitis (Blue monkey).